The primary structure comprises 1160 residues: AF4/FMR2 family member 4 (1160 aa).

The segment covering 1–19 has biased composition (basic and acidic residues); that stretch reads MNREDRNVLRMKERERRNQ. Disordered regions lie at residues 1–42, 78–289, 322–908, and 1031–1070; these read MNRE…YKVT, PKPA…SKAH, WPPP…FDDR, and NSYS…SSGG. Residues 115–128 show a composition bias toward polar residues; it reads PSTSQSQKRSSALQ. Ser120 is modified (phosphoserine). Over residues 172–189 the composition is skewed to low complexity; the sequence is RSSSPGKPQAVSSLSSSH. Residues 193–212 show a composition bias toward basic and acidic residues; that stretch reads HGNDHHSKEHQRSKSPRDPD. A Phosphoserine modification is found at Ser207. Positions 229-247 are enriched in low complexity; sequence SSQSFPPSLMSKSSSMLQK. 2 stretches are compositionally biased toward polar residues: residues 268 to 280 and 360 to 370; these read EHYS…NSMT and YSTAKTSNGHQ. Phosphoserine is present on residues Ser382, Ser383, Ser384, and Ser387. Positions 398-407 are enriched in polar residues; it reads PRSTPGSNSE. The span at 408–424 shows a compositional bias: basic and acidic residues; it reads PSHHNSEGADNSRDDSS. Residues 425 to 457 are compositionally biased toward low complexity; it reads SHSGSESSSGSDSESESSSSDSEANEPSQSASP. A phosphoserine mark is found at Ser482, Ser485, and Ser486. Composition is skewed to polar residues over residues 483 to 496, 505 to 523, and 544 to 555; these read PASS…SSQA, GTAS…SSAT, and SPAQSDSTTQRR. Ser544 is subject to Phosphoserine. The segment covering 563–581 has biased composition (basic and acidic residues); the sequence is KKPEKSAAEEPRGGLKIES. A Glycyl lysine isopeptide (Lys-Gly) (interchain with G-Cter in SUMO2) cross-link involves residue Lys578. Residues 594–607 show a composition bias toward basic residues; it reads SRHKAATKGSRKPN. Residues 608–622 show a composition bias toward basic and acidic residues; that stretch reads IKKESKSSPRPTAEK. Low complexity predominate over residues 641–657; sequence TDTSSSDSDGSESLPPS. Ser666 is modified (phosphoserine). The residue at position 669 (Thr669) is a Phosphothreonine. A phosphoserine mark is found at Ser675, Ser689, Ser698, and Ser701. Position 707 is a phosphotyrosine (Tyr707). Basic and acidic residues-rich tracts occupy residues 725 to 756, 764 to 784, and 794 to 806; these read PYKE…EKAS, KNDD…DKNS, and ESSK…EKDL. Position 809 is a phosphoserine (Ser809). N6-acetyllysine is present on Lys817. Ser831 carries the post-translational modification Phosphoserine. Composition is skewed to low complexity over residues 831 to 859 and 880 to 895; these read SQSS…SSTA and PNSS…TSES. Phosphoserine is present on residues Ser1040, Ser1052, Ser1055, and Ser1059. Low complexity predominate over residues 1059–1070; the sequence is SPGNSGSYSSGG.

Belongs to the AF4 family. In terms of assembly, component of the super elongation complex (SEC), at least composed of EAF1, EAF2, CDK9, MLLT3/AF9, AFF (AFF1 or AFF4), the P-TEFb complex and ELL (ELL, ELL2 or ELL3). Interacts with ELL2; the interaction is direct and leads to stabilize ELL2 and prevent ELL2 ubiquitination and degradation. Interacts with ELL3; the interaction is direct. Dephosphorylated at Ser-544 by the PNUTS-PP1 complex, promoting RNA polymerase II transcription pause-release. Highly expressed in testis by Sertoli cells, and at low levels in other tissues.

The protein localises to the nucleus. It localises to the chromosome. In terms of biological role, key component of the super elongation complex (SEC), a complex required to increase the catalytic rate of RNA polymerase II transcription by suppressing transient pausing by the polymerase at multiple sites along the DNA. In the SEC complex, AFF4 acts as a central scaffold that recruits other factors through direct interactions with ELL proteins (ELL, ELL2 or ELL3) and the P-TEFb complex. This Mus musculus (Mouse) protein is AF4/FMR2 family member 4 (Aff4).